Consider the following 415-residue polypeptide: Tyrosine--tRNA ligase (415 aa).

Positions 54–63 match the 'HIGH' region motif; sequence PTGSNIHLGH. The 'KMSKS' region motif lies at 248–252; that stretch reads KMSKS. K251 lines the ATP pocket. The S4 RNA-binding domain maps to 351-415; it reads AKAFYLLSAV…GKKTFRRLTA (65 aa).

This sequence belongs to the class-I aminoacyl-tRNA synthetase family. TyrS type 2 subfamily. Homodimer.

It is found in the cytoplasm. It catalyses the reaction tRNA(Tyr) + L-tyrosine + ATP = L-tyrosyl-tRNA(Tyr) + AMP + diphosphate + H(+). Catalyzes the attachment of tyrosine to tRNA(Tyr) in a two-step reaction: tyrosine is first activated by ATP to form Tyr-AMP and then transferred to the acceptor end of tRNA(Tyr). This chain is Tyrosine--tRNA ligase, found in Parasynechococcus marenigrum (strain WH8102).